Consider the following 197-residue polypeptide: Ribonuclease HII (197 aa).

An RNase H type-2 domain is found at 9-197; it reads KLIAGVDEVG…APVKKALEQF (189 aa). A divalent metal cation is bound by residues Asp15, Glu16, and Asp107.

It belongs to the RNase HII family. Mn(2+) serves as cofactor. Mg(2+) is required as a cofactor.

Its subcellular location is the cytoplasm. It carries out the reaction Endonucleolytic cleavage to 5'-phosphomonoester.. Functionally, endonuclease that specifically degrades the RNA of RNA-DNA hybrids. The protein is Ribonuclease HII of Haemophilus influenzae (strain PittEE).